The chain runs to 341 residues: Endolytic peptidoglycan transglycosylase RlpA (341 aa).

The first 26 residues, 1–26 (MSKRVRSSLILPAVCGLGLAAVLLSS), serve as a signal peptide directing secretion. Cysteine 27 carries the N-palmitoyl cysteine lipid modification. Cysteine 27 is lipidated: S-diacylglycerol cysteine. The SPOR domain maps to 260-341 (SLPADGLYLQ…LGQPTLVRPD (82 aa)).

It belongs to the RlpA family.

The protein resides in the cell membrane. In terms of biological role, lytic transglycosylase with a strong preference for naked glycan strands that lack stem peptides. Required for efficient separation of daughter cells and maintenance of rod shape. The polypeptide is Endolytic peptidoglycan transglycosylase RlpA (Pseudomonas aeruginosa (strain UCBPP-PA14)).